A 244-amino-acid chain; its full sequence is Carbonic anhydrase (244 aa).

The first 19 residues, 1-19 (MKGKFSIALMLSACFSASA), serve as a signal peptide directing secretion. The Alpha-carbonic anhydrase domain maps to 23–244 (VHWGYEGSGD…QPLNGRIIIH (222 aa)). An intrachain disulfide couples Cys-46 to Cys-199. The active-site Proton acceptor is the His-84. 3 residues coordinate Zn(2+): His-109, His-111, and His-128. 195–196 (TT) contributes to the substrate binding site.

Belongs to the alpha-carbonic anhydrase family. It depends on Zn(2+) as a cofactor.

The protein localises to the periplasm. The enzyme catalyses hydrogencarbonate + H(+) = CO2 + H2O. Functionally, reversible hydration of carbon dioxide. The sequence is that of Carbonic anhydrase (cah) from Pectobacterium atrosepticum (strain SCRI 1043 / ATCC BAA-672) (Erwinia carotovora subsp. atroseptica).